The primary structure comprises 310 residues: Nitric oxide synthase-interacting protein homolog (310 aa).

A compositionally biased stretch (polar residues) spans 115-124 (FSAIESTPSR). Positions 115–141 (FSAIESTPSRTGAVATPRPEVGSLKRQ) are disordered.

Belongs to the NOSIP family.

It localises to the cytoplasm. The protein localises to the nucleus. In terms of biological role, negatively regulates nitric oxide production by inducing nitric oxide synthase translocation to actin cytoskeleton and inhibiting its enzymatic activity. The chain is Nitric oxide synthase-interacting protein homolog from Caenorhabditis elegans.